We begin with the raw amino-acid sequence, 364 residues long: Protein FAM81A (364 aa).

Residues isoleucine 80–isoleucine 107 are a coiled coil. Over residues alanine 275–histidine 300 the composition is skewed to basic and acidic residues. Residues alanine 275 to glycine 301 are disordered.

This sequence belongs to the FAM81 family. In terms of assembly, interacts with DLG4/PSD-95, GRIN2B/GLUN2B and SYNGAP1; the interactions facilitate condensate formation. In terms of tissue distribution, highly expressed in brain (at protein level).

The protein localises to the postsynaptic density. The protein resides in the cytoplasm. Its function is as follows. Facilitates the interaction and assembly of proteins within the postsynaptic density by promoting the condensation of postsynaptic proteins via liquid-liquid phase separation. Required for neuronal activity. Accumulation at the postsynaptic density results in enlargement of dendritic spines. The sequence is that of Protein FAM81A from Rattus norvegicus (Rat).